We begin with the raw amino-acid sequence, 842 residues long: uncharacterized protein (842 aa).

2 disordered regions span residues 1-20 (MLHF…SPKE) and 142-209 (NSSS…TSSS). The uDENN FNIP1/2-type domain maps to 35–422 (TKDVTFRLVL…TAKSFHKCIL (388 aa)). Polar residues predominate over residues 183 to 209 (ANLSSSSKNMKDSTLSSQKARSNTSSS). A cDENN FNIP1/2-type domain is found at 430 to 772 (APLIKPSVFS…CYEIHEFPSE (343 aa)). 2 positions are modified to phosphoserine: Ser-573 and Ser-590. A dDENN FNIP1/2-type domain is found at 777 to 842 (YAPFLLKEHH…KEVLRVCSHC (66 aa)).

The protein localises to the cytoplasm. This is an uncharacterized protein from Schizosaccharomyces pombe (strain 972 / ATCC 24843) (Fission yeast).